We begin with the raw amino-acid sequence, 683 residues long: MSAFKARGVENPSYEDPDEKQKPDLEMSKTNGIGVDNPSYYKNPEKYLGNENEEGKSNNDNEEEEEGEEDQGAVERCVNKFYGGIHNFYKRNKKIIHYTFLGLLLVGYFALVIAACIVNFKQSLALLVLTLIAIFFFFWDLFIAKYGDKIAEALKPCQKFLDNHWSIIRWFVYGALLLAVILWLTLDTAKRGANQVIPFFGLILYILLVFIFSKHPTKVRWRIVIWGLLLQFIFGLIILRTKPGLDAFNWLGIQVQTFLKYTDAGSRFLFGDDFQDHFFAFAVLPIVIFFSTVMSMMYYLGLMQWLILKVGWLMQITMGTSPMESMVSAGNIFVGQTESPLLIRPYLADLTISEMHSVMSSGFATIAGSVLGAYISLGIPAAHLLTASVMSAPAALAISKTFWPETKKSKNSTQTSIKLEKGQENNLVEAASQGASAAVPLVANIAANLIAFLAVLAFINATLSWLGSMFNYPQFSFEIICSYVLMPFAFMMGVNYDDSFLVAELLGMKTFFNEFVAYQRLSEYIHNRESGGPLFVDGVRQYMSVRSEAIATYALCGFANFGSLGIMIGGLSSLAPHRKSDIASCGIRALIAGTIACFSTACIAGVLYIPELYCPNLLMSTLFENGTTVNTTNLMSCCTDLFKSTTMLTPKNITFTEGFNTTMLNGCCTFFPSGFNCSEVRPE.

Positions 1-71 (MSAFKARGVE…EEEEEGEEDQ (71 aa)) are disordered. Residues 1–97 (MSAFKARGVE…FYKRNKKIIH (97 aa)) lie on the Cytoplasmic side of the membrane. Acidic residues predominate over residues 60-71 (DNEEEEEGEEDQ). Residues 98-118 (YTFLGLLLVGYFALVIAACIV) form a helical membrane-spanning segment. Residues 119–123 (NFKQS) are Extracellular-facing. Residues 124 to 144 (LALLVLTLIAIFFFFWDLFIA) traverse the membrane as a helical segment. Over 145-168 (KYGDKIAEALKPCQKFLDNHWSII) the chain is Cytoplasmic. A helical membrane pass occupies residues 169 to 189 (RWFVYGALLLAVILWLTLDTA). Over 190–192 (KRG) the chain is Extracellular. A helical transmembrane segment spans residues 193 to 214 (ANQVIPFFGLILYILLVFIFSK). Topologically, residues 215–222 (HPTKVRWR) are cytoplasmic. The helical transmembrane segment at 223–242 (IVIWGLLLQFIFGLIILRTK) threads the bilayer. Over 243 to 279 (PGLDAFNWLGIQVQTFLKYTDAGSRFLFGDDFQDHFF) the chain is Extracellular. The helical transmembrane segment at 280-300 (AFAVLPIVIFFSTVMSMMYYL) threads the bilayer. At 301-324 (GLMQWLILKVGWLMQITMGTSPME) the chain is on the cytoplasmic side. An intramembrane region (helical) is located at residues 325–343 (SMVSAGNIFVGQTESPLLI). At 344 to 356 (RPYLADLTISEMH) the chain is on the cytoplasmic side. A helical membrane pass occupies residues 357 to 379 (SVMSSGFATIAGSVLGAYISLGI). Topologically, residues 380-381 (PA) are extracellular. The helical transmembrane segment at 382–403 (AHLLTASVMSAPAALAISKTFW) threads the bilayer. The Cytoplasmic portion of the chain corresponds to 404–438 (PETKKSKNSTQTSIKLEKGQENNLVEAASQGASAA). Residues 439–464 (VPLVANIAANLIAFLAVLAFINATLS) traverse the membrane as a helical segment. The Extracellular segment spans residues 465-502 (WLGSMFNYPQFSFEIICSYVLMPFAFMMGVNYDDSFLV). The helical intramembrane region spans 503–522 (AELLGMKTFFNEFVAYQRLS). The Extracellular portion of the chain corresponds to 523-561 (EYIHNRESGGPLFVDGVRQYMSVRSEAIATYALCGFANF). A helical membrane pass occupies residues 562 to 572 (GSLGIMIGGLS). At 573-585 (SLAPHRKSDIASC) the chain is on the cytoplasmic side. A helical membrane pass occupies residues 586-608 (GIRALIAGTIACFSTACIAGVLY). Over 609-683 (IPELYCPNLL…GFNCSEVRPE (75 aa)) the chain is Extracellular.

This sequence belongs to the concentrative nucleoside transporter (CNT) (TC 2.A.41) family. Homotrimer.

It localises to the cell membrane. It catalyses the reaction thymidine(out) + 2 Na(+)(out) = thymidine(in) + 2 Na(+)(in). It carries out the reaction cytidine(out) + 2 Na(+)(out) = cytidine(in) + 2 Na(+)(in). The catalysed reaction is uridine(out) + 2 Na(+)(out) = uridine(in) + 2 Na(+)(in). The enzyme catalyses adenosine(out) + 2 Na(+)(out) = adenosine(in) + 2 Na(+)(in). It catalyses the reaction guanosine(out) + 2 Na(+)(out) = guanosine(in) + 2 Na(+)(in). It carries out the reaction inosine(out) + 2 Na(+)(out) = inosine(in) + 2 Na(+)(in). In terms of biological role, sodium-dependent, pyrimidine- and purine-selective. Involved in the homeostasis of endogenous nucleosides. Exhibits the transport characteristics of the nucleoside transport system cib or N3 subtype (N3/cib) (with marked transport of both thymidine and inosine). Employs a 2:1 sodium/nucleoside ratio. Also able to transport gemcitabine, 3'-azido-3'-deoxythymidine (AZT), ribavirin and 3-deazauridine. This Eptatretus stoutii (Pacific hagfish) protein is Solute carrier family 28 member 3 (SLC28A3).